Reading from the N-terminus, the 150-residue chain is Transcriptional repressor NrdR (150 aa).

A zinc finger spans residues 3 to 34 (CPFCGYEDTFVIDTREIEDQKVIRRRRECPNC). Positions 49-139 (IMVIKKDGRR…VYQEFSSLEE (91 aa)) constitute an ATP-cone domain.

Belongs to the NrdR family. Zn(2+) serves as cofactor.

Negatively regulates transcription of bacterial ribonucleotide reductase nrd genes and operons by binding to NrdR-boxes. The protein is Transcriptional repressor NrdR of Dictyoglomus turgidum (strain DSM 6724 / Z-1310).